The primary structure comprises 398 residues: tRNA-specific 2-thiouridylase MnmA (398 aa).

Residues 18–25 (AMSGGVDS) and Leu44 each bind ATP. The active-site Nucleophile is Cys112. Residues Cys112 and Cys213 are joined by a disulfide bond. An ATP-binding site is contributed by Gly136. Residues 163–165 (RDQ) are interaction with tRNA. Residue Cys213 is the Cysteine persulfide intermediate of the active site.

Belongs to the MnmA/TRMU family.

It localises to the cytoplasm. The enzyme catalyses S-sulfanyl-L-cysteinyl-[protein] + uridine(34) in tRNA + AH2 + ATP = 2-thiouridine(34) in tRNA + L-cysteinyl-[protein] + A + AMP + diphosphate + H(+). In terms of biological role, catalyzes the 2-thiolation of uridine at the wobble position (U34) of tRNA, leading to the formation of s(2)U34. In Rhizobium meliloti (strain 1021) (Ensifer meliloti), this protein is tRNA-specific 2-thiouridylase MnmA.